The following is a 315-amino-acid chain: Homoserine kinase (315 aa).

97–107 provides a ligand contact to ATP; it reads PPARGLGSSAT.

It belongs to the GHMP kinase family. Homoserine kinase subfamily.

The protein resides in the cytoplasm. It catalyses the reaction L-homoserine + ATP = O-phospho-L-homoserine + ADP + H(+). It functions in the pathway amino-acid biosynthesis; L-threonine biosynthesis; L-threonine from L-aspartate: step 4/5. In terms of biological role, catalyzes the ATP-dependent phosphorylation of L-homoserine to L-homoserine phosphate. This chain is Homoserine kinase, found in Prochlorococcus marinus (strain MIT 9215).